The primary structure comprises 360 residues: Epoxide hydrolase 3 (360 aa).

A helical membrane pass occupies residues 22–42 (AFMWSLVFSVALVAAAVYGCI). The active-site Nucleophile is the aspartate 173. Tyrosine 281 (proton donor) is an active-site residue. Histidine 337 (proton acceptor) is an active-site residue.

Belongs to the AB hydrolase superfamily. Epoxide hydrolase family.

The protein resides in the microsome membrane. It catalyses the reaction an epoxide + H2O = an ethanediol. The catalysed reaction is 9,10-epoxyoctadecanoate + H2O = 9,10-dihydroxyoctadecanoate. The enzyme catalyses 9,10-epoxy-(12Z)-octadecenoate + H2O = 9,10-dihydroxy-(12Z)-octadecenoate. It carries out the reaction 8,9-epoxy-(5Z,11Z,14Z)-eicosatrienoate + H2O = 8,9-dihydroxy-(5Z,11Z,14Z)-eicosatrienoate. It catalyses the reaction 11,12-epoxy-(5Z,8Z,14Z)-eicosatrienoate + H2O = 11,12-dihydroxy-(5Z,8Z,14Z)-eicosatrienoate. The catalysed reaction is 14,15-epoxy-(5Z,8Z,11Z)-eicosatrienoate + H2O = 14,15-dihydroxy-(5Z,8Z,11Z)-eicosatrienoate. Inhibited by 1-(1-acetylpiperidin-4-yl)-3-(4-(trifl uoromethoxy)phenyl)urea (TPAU), 1-cyclohexyl-3-dodecylurea (CDU), 12-(3-adamantan-1-yl-ureido)-dodecanoic acid (AUDA), 1-((3S, 5S, 7S)-adamantan-1-yl)-3-(5-(2-(2-ethoxyethoxy) ethoxy)pentyl)urea (AEPU) and to a lesser extent by 8-(3-((3S, 5S, 7S)-adamantan-1-yl)ureido) octanoic acid (AUOA). In terms of biological role, catalyzes the hydrolysis of epoxide-containing fatty acids. Active in vitro against epoxyeicosatrienoic acids (EETs) including 8,9-EET, 9,10-EET, 11,12-EET and 14,15-EET and leukotoxin. The sequence is that of Epoxide hydrolase 3 (EPHX3) from Homo sapiens (Human).